The following is a 91-amino-acid chain: Small ribosomal subunit protein bS16 (91 aa).

The protein belongs to the bacterial ribosomal protein bS16 family.

The sequence is that of Small ribosomal subunit protein bS16 from Phytoplasma australiense.